The chain runs to 532 residues: Glutamate--cysteine ligase (532 aa).

It belongs to the glutamate--cysteine ligase type 1 family. Type 1 subfamily.

It catalyses the reaction L-cysteine + L-glutamate + ATP = gamma-L-glutamyl-L-cysteine + ADP + phosphate + H(+). The protein operates within sulfur metabolism; glutathione biosynthesis; glutathione from L-cysteine and L-glutamate: step 1/2. This Pseudomonas fluorescens (strain Pf0-1) protein is Glutamate--cysteine ligase.